The following is a 221-amino-acid chain: Probable septum site-determining protein MinC (221 aa).

This sequence belongs to the MinC family. In terms of assembly, interacts with MinD and FtsZ.

Functionally, cell division inhibitor that blocks the formation of polar Z ring septums. Rapidly oscillates between the poles of the cell to destabilize FtsZ filaments that have formed before they mature into polar Z rings. Prevents FtsZ polymerization. The sequence is that of Probable septum site-determining protein MinC from Shewanella frigidimarina (strain NCIMB 400).